The following is a 278-amino-acid chain: 1-acyl-sn-glycerol-3-phosphate acyltransferase beta (278 aa).

An N-terminal signal peptide occupies residues 1–23 (MDPWPWLTAALLLLLLLVQLSRT). At 24–29 (ARFYAK) the chain is on the lumenal side. The chain crosses the membrane as a helical span at residues 30–50 (VGLYCVLCLSFSAAASIVCLL). Residues 51 to 121 (RHGGRTVDNM…PKRCVQIAKR (71 aa)) lie on the Cytoplasmic side of the membrane. Residues 98-103 (HQSILD) carry the HXXXXD motif motif. The helical transmembrane segment at 122–142 (ELMFTGPVGLIMYLGGVYFIN) threads the bilayer. Residues 143–278 (RQQARTAMSV…IKEPGVLPAQ (136 aa)) lie on the Lumenal side of the membrane. The EGTR motif motif lies at 172–175 (EGTR).

It belongs to the 1-acyl-sn-glycerol-3-phosphate acyltransferase family. As to expression, expressed at high levels in the liver, at intermediate levels in the kidney, gut, heart and skeletal muscles. Undetectable in brain and spleen.

It localises to the endoplasmic reticulum membrane. It catalyses the reaction a 1-acyl-sn-glycero-3-phosphate + an acyl-CoA = a 1,2-diacyl-sn-glycero-3-phosphate + CoA. The catalysed reaction is 1-(9Z-octadecenoyl)-sn-glycero-3-phosphate + (9Z)-octadecenoyl-CoA = 1,2-di-(9Z-octadecenoyl)-sn-glycero-3-phosphate + CoA. The enzyme catalyses 1-(9Z-octadecenoyl)-sn-glycero-3-phosphate + hexadecanoyl-CoA = 1-(9Z)-octadecenoyl-2-hexadecanoyl-sn-glycero-3-phosphate + CoA. It carries out the reaction heptadecanoyl-CoA + 1-(9Z-octadecenoyl)-sn-glycero-3-phosphate = 1-(9Z)-octadecenoyl-2-heptadecanoyl-sn-glycero-3-phosphate + CoA. It catalyses the reaction 1-(9Z-octadecenoyl)-sn-glycero-3-phosphate + (9Z,12Z)-octadecadienoyl-CoA = 1-(9Z)-octadecenoyl-2-(9Z,12Z)-octadecadienoyl-sn-glycero-3-phosphate + CoA. The catalysed reaction is 1-(9Z-octadecenoyl)-sn-glycero-3-phosphate + tetradecanoyl-CoA = 1-(9Z)-octadecenoyl-2-tetradecanoyl-sn-glycero-3-phosphate + CoA. The enzyme catalyses pentadecanoyl-CoA + 1-(9Z-octadecenoyl)-sn-glycero-3-phosphate = 1-(9Z)-octadecenoyl-2-pentadecanoyl-sn-glycero-3-phosphate + CoA. It carries out the reaction 1-hexadecanoyl-sn-glycero-3-phosphate + (9Z)-octadecenoyl-CoA = 1-hexadecanoyl-2-(9Z-octadecenoyl)-sn-glycero-3-phosphate + CoA. It catalyses the reaction 1-tetradecanoyl-sn-glycerol 3-phosphate + (9Z)-octadecenoyl-CoA = 1-tetradecanoyl-2-(9Z)-octadecenoyl-sn-glycero-3-phosphate + CoA. The catalysed reaction is 1-(9Z,12Z,15Z)-octadecatrienoyl-sn-glycero-3-phosphate + (9Z)-octadecenoyl-CoA = 1-(9Z,12Z,15Z)-octadecatrienoyl-2-(9Z)-octadecenoyl-sn-glycero-3-phosphate + CoA. The enzyme catalyses 1-(6Z,9Z,12Z-octadecatrienoyl)-sn-glycero-3-phosphate + (9Z)-octadecenoyl-CoA = (6Z,9Z,12Z)-octadecatrienoyl-2-(9Z)-octadecenoyl-sn-glycero-3-phosphate + CoA. It carries out the reaction 1-eicosanoyl-sn-glycero-3-phosphate + (9Z)-octadecenoyl-CoA = 1-eicosanoyl-2-(9Z)-octadecenoyl-sn-glycero-3-phosphate + CoA. It catalyses the reaction 1-hexadecanoyl-sn-glycero-3-phosphate + octadecanoyl-CoA = 1-hexadecanoyl-2-octadecanoyl-sn-glycero-3-phosphate + CoA. The catalysed reaction is 1-hexadecanoyl-sn-glycero-3-phosphate + (5Z,8Z,11Z,14Z)-eicosatetraenoyl-CoA = 1-hexadecanoyl-2-(5Z,8Z,11Z,14Z-eicosatetraenoyl)-sn-glycero-3-phosphate + CoA. The enzyme catalyses 1-hexadecanoyl-sn-glycero-3-phosphate + hexadecanoyl-CoA = 1,2-dihexadecanoyl-sn-glycero-3-phosphate + CoA. It carries out the reaction 1-hexadecanoyl-sn-glycero-3-phosphate + tetradecanoyl-CoA = 1-hexadecanoyl-2-tetradecanoyl-sn-glycero-3-phosphate + CoA. It catalyses the reaction (11Z)-octadecenoyl-CoA + 1-(9Z-octadecenoyl)-sn-glycero-3-phosphate = 1-(9Z)-octadecenoyl-2-(11Z)-octadecenoyl-sn-glycero-3-phosphate + CoA. It functions in the pathway phospholipid metabolism; CDP-diacylglycerol biosynthesis; CDP-diacylglycerol from sn-glycerol 3-phosphate: step 2/3. In terms of biological role, converts 1-acyl-sn-glycerol-3-phosphate (lysophosphatidic acid or LPA) into 1,2-diacyl-sn-glycerol-3-phosphate (phosphatidic acid or PA) by incorporating an acyl moiety at the sn-2 position of the glycerol backbone. This is 1-acyl-sn-glycerol-3-phosphate acyltransferase beta (Agpat2) from Mus musculus (Mouse).